The chain runs to 589 residues: ATP-dependent lipid A-core flippase (589 aa).

5 consecutive transmembrane segments (helical) span residues W23–F43, L60–A80, V153–I173, V249–A269, and P272–L292. The region spanning L27–K307 is the ABC transmembrane type-1 domain. Residues I339 to M575 enclose the ABC transporter domain. Position 373–380 (G373–S380) interacts with ATP.

This sequence belongs to the ABC transporter superfamily. Lipid exporter (TC 3.A.1.106) family. Homodimer.

It is found in the cell inner membrane. It carries out the reaction ATP + H2O + lipid A-core oligosaccharideSide 1 = ADP + phosphate + lipid A-core oligosaccharideSide 2.. Its function is as follows. Involved in lipopolysaccharide (LPS) biosynthesis. Translocates lipid A-core from the inner to the outer leaflet of the inner membrane. Transmembrane domains (TMD) form a pore in the inner membrane and the ATP-binding domain (NBD) is responsible for energy generation. This is ATP-dependent lipid A-core flippase from Coxiella burnetii (strain RSA 493 / Nine Mile phase I).